The primary structure comprises 83 residues: MGDVILSPVSTEKTALLAEKENKLTLIVDRKATKEDIKREVESRFSVKVEGINILITKKGKKAIVKLAKEYSAEEIAERIGVF.

Belongs to the universal ribosomal protein uL23 family. As to quaternary structure, part of the 50S ribosomal subunit. Contacts protein L29.

Binds to 23S rRNA. One of the proteins that surrounds the polypeptide exit tunnel on the outside of the ribosome. The sequence is that of Large ribosomal subunit protein uL23 from Thermoplasma volcanium (strain ATCC 51530 / DSM 4299 / JCM 9571 / NBRC 15438 / GSS1).